Here is a 453-residue protein sequence, read N- to C-terminus: Phosphoglucosamine mutase (453 aa).

Ser102 serves as the catalytic Phosphoserine intermediate. Residues Ser102, Asp244, Asp246, and Asp248 each coordinate Mg(2+). Ser102 is modified (phosphoserine).

The protein belongs to the phosphohexose mutase family. Mg(2+) is required as a cofactor. Activated by phosphorylation.

It catalyses the reaction alpha-D-glucosamine 1-phosphate = D-glucosamine 6-phosphate. In terms of biological role, catalyzes the conversion of glucosamine-6-phosphate to glucosamine-1-phosphate. The chain is Phosphoglucosamine mutase from Pelobacter propionicus (strain DSM 2379 / NBRC 103807 / OttBd1).